Consider the following 464-residue polypeptide: Glycine--tRNA ligase (464 aa).

Substrate is bound by residues Arg104 and Glu175. ATP-binding positions include 207–209, 217–222, 292–293, and 336–339; these read RNE, FRTREF, EL, and GVNR. Position 222-226 (222-226) interacts with substrate; that stretch reads FEQME. Residue 332-336 coordinates substrate; sequence EPALG.

The protein belongs to the class-II aminoacyl-tRNA synthetase family. In terms of assembly, homodimer.

It localises to the cytoplasm. The catalysed reaction is tRNA(Gly) + glycine + ATP = glycyl-tRNA(Gly) + AMP + diphosphate. Its function is as follows. Catalyzes the attachment of glycine to tRNA(Gly). The polypeptide is Glycine--tRNA ligase (Leptospira interrogans serogroup Icterohaemorrhagiae serovar Lai (strain 56601)).